Here is a 160-residue protein sequence, read N- to C-terminus: uncharacterized protein (160 aa).

Residues 47–67 form a helical membrane-spanning segment; that stretch reads LLGGFANVAAILTPLVAVLAY.

The protein resides in the membrane. This is an uncharacterized protein from Sinorhizobium fredii (strain NBRC 101917 / NGR234).